Reading from the N-terminus, the 78-residue chain is Conotoxin 6 (78 aa).

An N-terminal signal peptide occupies residues 1-22 (MKLTCMMIVAVLFLTAWIFITA). Residues 23-51 (DNSRNGIENLPRMRRHEMKNPKASKLNKR) constitute a propeptide that is removed on maturation. 3 cysteine pairs are disulfide-bonded: Cys53-Cys69, Cys60-Cys73, and Cys68-Cys77.

It belongs to the conotoxin O1 superfamily. In terms of tissue distribution, expressed by the venom duct.

It localises to the secreted. The protein is Conotoxin 6 of Conus imperialis (Imperial cone).